Reading from the N-terminus, the 256-residue chain is Pimeloyl-[acyl-carrier protein] methyl ester esterase (256 aa).

One can recognise an AB hydrolase-1 domain in the interval 15–242; the sequence is HLVLLHGWGL…AAHAPFISHP (228 aa). Substrate contacts are provided by residues tryptophan 22, 82–83, and 143–147; these read SL and FLALQ. Serine 82 serves as the catalytic Nucleophile. Residues aspartate 207 and histidine 235 contribute to the active site. Substrate is bound at residue histidine 235.

It belongs to the AB hydrolase superfamily. Carboxylesterase BioH family. As to quaternary structure, monomer.

It is found in the cytoplasm. The enzyme catalyses 6-carboxyhexanoyl-[ACP] methyl ester + H2O = 6-carboxyhexanoyl-[ACP] + methanol + H(+). It functions in the pathway cofactor biosynthesis; biotin biosynthesis. Its function is as follows. The physiological role of BioH is to remove the methyl group introduced by BioC when the pimeloyl moiety is complete. It allows to synthesize pimeloyl-ACP via the fatty acid synthetic pathway through the hydrolysis of the ester bonds of pimeloyl-ACP esters. The chain is Pimeloyl-[acyl-carrier protein] methyl ester esterase from Shigella dysenteriae serotype 1 (strain Sd197).